Here is a 71-residue protein sequence, read N- to C-terminus: Small ribosomal subunit protein bS21 (71 aa).

The span at alanine 50–lysine 59 shows a compositional bias: basic residues. The interval alanine 50–tyrosine 71 is disordered. A compositionally biased stretch (basic and acidic residues) spans valine 60–tyrosine 71.

This sequence belongs to the bacterial ribosomal protein bS21 family.

The polypeptide is Small ribosomal subunit protein bS21 (Pseudomonas entomophila (strain L48)).